The chain runs to 678 residues: Vacuolar protein sorting-associated protein 1 (678 aa).

Residues 24-311 (LIDLPQITVV…LMHHIRNTLP (288 aa)) enclose the Dynamin-type G domain. Residues 34–41 (RSQSSGKS) form a G1 motif region. 34–41 (RSQSSGKS) lines the GTP pocket. The segment at 60–62 (VTR) is G2 motif. Residues 71 to 96 (NRPSASGKNEETTTDSDGKDQNNSSE) form a disordered region. The span at 78–90 (KNEETTTDSDGKD) shows a compositional bias: basic and acidic residues. The G3 motif stretch occupies residues 153–156 (DLPG). GTP-binding positions include 153-157 (DLPGL) and 222-225 (TKVD). The tract at residues 222–225 (TKVD) is G4 motif. The G5 motif stretch occupies residues 252-255 (INRG). The GED domain occupies 592–678 (TEVIKLLIMS…LQASEIVSNV (87 aa)).

Belongs to the TRAFAC class dynamin-like GTPase superfamily. Dynamin/Fzo/YdjA family.

The protein is Vacuolar protein sorting-associated protein 1 (vps1) of Schizosaccharomyces pombe (strain 972 / ATCC 24843) (Fission yeast).